We begin with the raw amino-acid sequence, 429 residues long: Enolase (429 aa).

Glutamine 163 is a binding site for (2R)-2-phosphoglycerate. Glutamate 205 (proton donor) is an active-site residue. Mg(2+) is bound by residues aspartate 242, glutamate 285, and aspartate 312. 4 residues coordinate (2R)-2-phosphoglycerate: lysine 337, arginine 366, serine 367, and lysine 388. The active-site Proton acceptor is the lysine 337.

The protein belongs to the enolase family. As to quaternary structure, component of the RNA degradosome, a multiprotein complex involved in RNA processing and mRNA degradation. Requires Mg(2+) as cofactor.

Its subcellular location is the cytoplasm. It is found in the secreted. It localises to the cell surface. The enzyme catalyses (2R)-2-phosphoglycerate = phosphoenolpyruvate + H2O. It functions in the pathway carbohydrate degradation; glycolysis; pyruvate from D-glyceraldehyde 3-phosphate: step 4/5. Functionally, catalyzes the reversible conversion of 2-phosphoglycerate (2-PG) into phosphoenolpyruvate (PEP). It is essential for the degradation of carbohydrates via glycolysis. The protein is Enolase of Alkalilimnicola ehrlichii (strain ATCC BAA-1101 / DSM 17681 / MLHE-1).